A 373-amino-acid chain; its full sequence is Glutamate 5-kinase (373 aa).

Residue Lys-15 participates in ATP binding. Substrate-binding residues include Ser-55, Asp-142, and Asn-154. ATP is bound by residues 174 to 175 (TD) and 216 to 222 (TGGMATK). The region spanning 281–359 (AGSIVVDAGA…SEIEGILGFR (79 aa)) is the PUA domain.

It belongs to the glutamate 5-kinase family.

It localises to the cytoplasm. It catalyses the reaction L-glutamate + ATP = L-glutamyl 5-phosphate + ADP. Its pathway is amino-acid biosynthesis; L-proline biosynthesis; L-glutamate 5-semialdehyde from L-glutamate: step 1/2. Functionally, catalyzes the transfer of a phosphate group to glutamate to form L-glutamate 5-phosphate. The polypeptide is Glutamate 5-kinase (Citrifermentans bemidjiense (strain ATCC BAA-1014 / DSM 16622 / JCM 12645 / Bem) (Geobacter bemidjiensis)).